The following is a 295-amino-acid chain: Putative xyloglucan endotransglucosylase/hydrolase protein 1 (295 aa).

The first 24 residues, 1–24, serve as a signal peptide directing secretion; sequence MNKMEYLSIFGFVSVLYLIIRVDA. The GH16 domain maps to 27–225; the sequence is YEVNGIDQSK…WSLAPFKANF (199 aa). E113 functions as the Nucleophile in the catalytic mechanism. E117 serves as the catalytic Proton donor. Xyloglucan is bound by residues E117, 129–131, and 139–141; these read QTN and NRE. N-linked (GlcNAc...) asparagine glycosylation occurs at N180. Xyloglucan-binding positions include 204 to 205 and G209; that span reads NW. N-linked (GlcNAc...) asparagine glycans are attached at residues N215 and N229. 2 disulfide bridges follow: C233-C242 and C278-C291. R283 serves as a coordination point for xyloglucan.

This sequence belongs to the glycosyl hydrolase 16 family. XTH group 1 subfamily. Post-translationally, contains at least one intrachain disulfide bond essential for its enzymatic activity.

It is found in the secreted. The protein localises to the cell wall. It localises to the extracellular space. The protein resides in the apoplast. The catalysed reaction is breaks a beta-(1-&gt;4) bond in the backbone of a xyloglucan and transfers the xyloglucanyl segment on to O-4 of the non-reducing terminal glucose residue of an acceptor, which can be a xyloglucan or an oligosaccharide of xyloglucan.. May catalyze xyloglucan endohydrolysis (XEH) and/or endotransglycosylation (XET). Cleaves and religates xyloglucan polymers, an essential constituent of the primary cell wall, and thereby participates in cell wall construction of growing tissues. This is Putative xyloglucan endotransglucosylase/hydrolase protein 1 (XTH1) from Arabidopsis thaliana (Mouse-ear cress).